The following is a 242-amino-acid chain: UPF0309 protein BMEA_B0892 (242 aa).

Residues 30 to 214 (AADLIAAAAR…ARLVGEGDAP (185 aa)) form the SIS domain.

The protein belongs to the UPF0309 family.

This Brucella melitensis biotype 2 (strain ATCC 23457) protein is UPF0309 protein BMEA_B0892.